Here is a 270-residue protein sequence, read N- to C-terminus: Formamidopyrimidine-DNA glycosylase (270 aa).

P2 functions as the Schiff-base intermediate with DNA in the catalytic mechanism. E3 acts as the Proton donor in catalysis. Catalysis depends on K57, which acts as the Proton donor; for beta-elimination activity. The DNA site is built by H90, R109, and K151. Residues 236 to 270 (RVYGRKGQACEVCESEIQSVTLGQRNTFFCEQCQK) form an FPG-type zinc finger. R260 (proton donor; for delta-elimination activity) is an active-site residue.

Belongs to the FPG family. Monomer. Zn(2+) is required as a cofactor.

The catalysed reaction is Hydrolysis of DNA containing ring-opened 7-methylguanine residues, releasing 2,6-diamino-4-hydroxy-5-(N-methyl)formamidopyrimidine.. It carries out the reaction 2'-deoxyribonucleotide-(2'-deoxyribose 5'-phosphate)-2'-deoxyribonucleotide-DNA = a 3'-end 2'-deoxyribonucleotide-(2,3-dehydro-2,3-deoxyribose 5'-phosphate)-DNA + a 5'-end 5'-phospho-2'-deoxyribonucleoside-DNA + H(+). In terms of biological role, involved in base excision repair of DNA damaged by oxidation or by mutagenic agents. Acts as a DNA glycosylase that recognizes and removes damaged bases. Has a preference for oxidized purines, such as 7,8-dihydro-8-oxoguanine (8-oxoG). Has AP (apurinic/apyrimidinic) lyase activity and introduces nicks in the DNA strand. Cleaves the DNA backbone by beta-delta elimination to generate a single-strand break at the site of the removed base with both 3'- and 5'-phosphates. This Pseudoalteromonas atlantica (strain T6c / ATCC BAA-1087) protein is Formamidopyrimidine-DNA glycosylase.